The chain runs to 375 residues: Chaperone protein DnaJ (375 aa).

The 66-residue stretch at 5-70 (DYYSLLEVER…QKRAAYDRYG (66 aa)) folds into the J domain. Residues 135 to 213 (GKTVDIEIDV…CHGEGRCEKH (79 aa)) form a CR-type zinc finger. 8 residues coordinate Zn(2+): cysteine 148, cysteine 151, cysteine 165, cysteine 168, cysteine 187, cysteine 190, cysteine 201, and cysteine 204. CXXCXGXG motif repeat units follow at residues 148–155 (CDACHGSG), 165–172 (CDTCHGSG), 187–194 (CPVCQGKG), and 201–208 (CPECHGEG).

The protein belongs to the DnaJ family. Homodimer. It depends on Zn(2+) as a cofactor.

The protein resides in the cytoplasm. Participates actively in the response to hyperosmotic and heat shock by preventing the aggregation of stress-denatured proteins and by disaggregating proteins, also in an autonomous, DnaK-independent fashion. Unfolded proteins bind initially to DnaJ; upon interaction with the DnaJ-bound protein, DnaK hydrolyzes its bound ATP, resulting in the formation of a stable complex. GrpE releases ADP from DnaK; ATP binding to DnaK triggers the release of the substrate protein, thus completing the reaction cycle. Several rounds of ATP-dependent interactions between DnaJ, DnaK and GrpE are required for fully efficient folding. Also involved, together with DnaK and GrpE, in the DNA replication of plasmids through activation of initiation proteins. This Zymomonas mobilis subsp. mobilis (strain ATCC 31821 / ZM4 / CP4) protein is Chaperone protein DnaJ.